The chain runs to 315 residues: tRNA dimethylallyltransferase (315 aa).

10–17 is a binding site for ATP; that stretch reads GPTEVGKT. 12-17 is a substrate binding site; it reads TEVGKT. Residues 35 to 38 are interaction with substrate tRNA; it reads DSMQ.

Belongs to the IPP transferase family. Monomer. Mg(2+) is required as a cofactor.

The catalysed reaction is adenosine(37) in tRNA + dimethylallyl diphosphate = N(6)-dimethylallyladenosine(37) in tRNA + diphosphate. Catalyzes the transfer of a dimethylallyl group onto the adenine at position 37 in tRNAs that read codons beginning with uridine, leading to the formation of N6-(dimethylallyl)adenosine (i(6)A). This chain is tRNA dimethylallyltransferase, found in Geobacillus thermodenitrificans (strain NG80-2).